We begin with the raw amino-acid sequence, 248 residues long: ATP synthase subunit a (248 aa).

Transmembrane regions (helical) follow at residues 34–54, 91–111, 121–141, 147–167, 197–217, and 220–240; these read TNVT…LVAG, YFPY…LGLI, IAVT…IGFV, FLSL…LAVI, FAGF…VMAI, and LEVL…CVYL.

Belongs to the ATPase A chain family. In terms of assembly, F-type ATPases have 2 components, CF(1) - the catalytic core - and CF(0) - the membrane proton channel. CF(1) has five subunits: alpha(3), beta(3), gamma(1), delta(1), epsilon(1). CF(0) has four main subunits: a, b, b' and c.

It localises to the cell inner membrane. Key component of the proton channel; it plays a direct role in the translocation of protons across the membrane. The sequence is that of ATP synthase subunit a from Dinoroseobacter shibae (strain DSM 16493 / NCIMB 14021 / DFL 12).